Here is a 642-residue protein sequence, read N- to C-terminus: Chaperone protein DnaK (642 aa).

Thr199 carries the post-translational modification Phosphothreonine; by autocatalysis. A compositionally biased stretch (basic and acidic residues) spans 570 to 585 (EELEQASKDGDKEAID). The segment at 570-642 (EELEQASKDG…FEEVKDDDKK (73 aa)) is disordered. Positions 600-620 (EAAQQQQAQQGAEGAAGGEQQ) are enriched in low complexity. Residues 627-642 (DVVDAEFEEVKDDDKK) show a composition bias toward acidic residues.

The protein belongs to the heat shock protein 70 family.

In terms of biological role, acts as a chaperone. This Idiomarina loihiensis (strain ATCC BAA-735 / DSM 15497 / L2-TR) protein is Chaperone protein DnaK.